The sequence spans 145 residues: Basic phospholipase A2 S6-45 (145 aa).

The N-terminal stretch at 1 to 19 (MYPAHLLVLLAVCVSLLGA) is a signal peptide. Positions 20–27 (SDIPPQPL) are excised as a propeptide. Intrachain disulfides connect cysteine 38–cysteine 99, cysteine 54–cysteine 144, cysteine 56–cysteine 72, cysteine 71–cysteine 127, cysteine 78–cysteine 120, cysteine 88–cysteine 113, and cysteine 106–cysteine 118. Ca(2+) contacts are provided by tyrosine 55, glycine 57, and glycine 59. Residue histidine 75 is part of the active site. Aspartate 76 serves as a coordination point for Ca(2+). The active site involves aspartate 121.

Belongs to the phospholipase A2 family. Group I subfamily. D49 sub-subfamily. The cofactor is Ca(2+). In terms of tissue distribution, expressed by the venom gland.

It is found in the secreted. The catalysed reaction is a 1,2-diacyl-sn-glycero-3-phosphocholine + H2O = a 1-acyl-sn-glycero-3-phosphocholine + a fatty acid + H(+). Snake venom phospholipase A2 (PLA2) that inhibits collagen-induced platelet aggregation. PLA2 catalyzes the calcium-dependent hydrolysis of the 2-acyl groups in 3-sn-phosphoglycerides. The sequence is that of Basic phospholipase A2 S6-45 from Austrelaps superbus (Lowland copperhead snake).